The following is a 266-amino-acid chain: Isopentenyl phosphate kinase (266 aa).

Position 5 to 9 (5 to 9 (KLGGS)) interacts with ATP. Alanine 47 is a binding site for substrate. Position 48 (glycine 48) interacts with ATP. 2 residues coordinate substrate: histidine 52 and glycine 157. ATP-binding positions include aspartate 178, 183–188 (YTRNPK), glycine 219, and lysine 223.

It belongs to the isopentenyl phosphate kinase family. In terms of assembly, homodimer.

It catalyses the reaction isopentenyl phosphate + ATP = isopentenyl diphosphate + ADP. In terms of biological role, catalyzes the formation of isopentenyl diphosphate (IPP), the building block of all isoprenoids. Has lower activity with dimethylallyl phosphate (DMAP) and isopentenyl thiolophosphate (ISP). Has low activity with 1-butyl phosphate (BP) and 3-buten-1-yl phosphate (BEP). Has no significant activity with geranyl phosphate (in vitro). In Methanothermobacter thermautotrophicus (strain ATCC 29096 / DSM 1053 / JCM 10044 / NBRC 100330 / Delta H) (Methanobacterium thermoautotrophicum), this protein is Isopentenyl phosphate kinase.